The primary structure comprises 364 residues: Phosphoserine aminotransferase (364 aa).

Arg40 provides a ligand contact to L-glutamate. Residues 74-75 (GT), Trp100, Thr149, Asp170, and Gln193 each bind pyridoxal 5'-phosphate. Lys194 is modified (N6-(pyridoxal phosphate)lysine). 235 to 236 (NT) is a binding site for pyridoxal 5'-phosphate.

It belongs to the class-V pyridoxal-phosphate-dependent aminotransferase family. SerC subfamily. Homodimer. Requires pyridoxal 5'-phosphate as cofactor. As to expression, expressed in ovary and head.

The enzyme catalyses O-phospho-L-serine + 2-oxoglutarate = 3-phosphooxypyruvate + L-glutamate. It carries out the reaction 4-(phosphooxy)-L-threonine + 2-oxoglutarate = (R)-3-hydroxy-2-oxo-4-phosphooxybutanoate + L-glutamate. The protein operates within amino-acid biosynthesis; L-serine biosynthesis; L-serine from 3-phospho-D-glycerate: step 2/3. It participates in cofactor biosynthesis; pyridoxine 5'-phosphate biosynthesis; pyridoxine 5'-phosphate from D-erythrose 4-phosphate: step 3/5. Functionally, catalyzes the reversible conversion of 3-phosphohydroxypyruvate to phosphoserine and of 3-hydroxy-2-oxo-4-phosphonooxybutanoate to phosphohydroxythreonine. In Drosophila melanogaster (Fruit fly), this protein is Phosphoserine aminotransferase.